The sequence spans 685 residues: A-type ATP synthase subunit I (685 aa).

A run of 7 helical transmembrane segments spans residues 172-192 (VGGL…VAVP), 348-368 (EIVP…LMFP), 394-414 (VIAV…EVFG), 464-484 (LFMG…NGVI), 538-558 (LVLA…PIIY), 604-624 (MFVI…ADVV), and 626-646 (ALLY…LAFA).

Belongs to the V-ATPase 116 kDa subunit family. As to quaternary structure, has multiple subunits with at least A(3), B(3), C, D, E, F, H, I and proteolipid K(x).

The protein resides in the cell membrane. Component of the A-type ATP synthase that produces ATP from ADP in the presence of a proton gradient across the membrane. This is A-type ATP synthase subunit I from Aeropyrum pernix (strain ATCC 700893 / DSM 11879 / JCM 9820 / NBRC 100138 / K1).